Consider the following 804-residue polypeptide: Endoplasmin (804 aa).

An N-terminal signal peptide occupies residues 1–21 (MRALWVLGLCCVLLTFGSVRA). The SRT pseudosubstrate motif signature appears at 42–44 (SRT). Asparagine 62 carries N-linked (GlcNAc...) asparagine glycosylation. Serine 64 carries the phosphoserine modification. N-linked (GlcNAc...) asparagine glycosylation is present at asparagine 107. ATP is bound by residues asparagine 107, aspartate 149, and asparagine 162. Residue lysine 168 is modified to N6-(2-hydroxyisobutyryl)lysine. Serine 172 is modified (phosphoserine). Phenylalanine 199 provides a ligand contact to ATP. Asparagine 217 carries N-linked (GlcNAc...) asparagine glycosylation. The tract at residues 288 to 323 (TVEEPAEEEEAAKEDKEESDDEAAVEEEEDEKKPKT) is disordered. A compositionally biased stretch (acidic residues) spans 289–317 (VEEPAEEEEAAKEDKEESDDEAAVEEEED). A phosphoserine mark is found at serine 306 and serine 403. N6-succinyllysine is present on lysine 404. The N-linked (GlcNAc...) asparagine glycan is linked to asparagine 445. At serine 447 the chain carries Phosphoserine. Position 479 is an N6-acetyllysine (lysine 479). 2 N-linked (GlcNAc...) asparagine glycosylation sites follow: asparagine 481 and asparagine 502. Lysine 633 is modified (N6-succinyllysine). Residues 750–804 (DPDAKVEEEPEEEPEETTEDTAEDTEQDEEEEMDAGTDEEEQETAEKSTAEKDEL) are disordered. Acidic residues predominate over residues 757-792 (EEPEEEPEETTEDTAEDTEQDEEEEMDAGTDEEEQE). Threonine 786 is modified (phosphothreonine). Residues 793 to 804 (TAEKSTAEKDEL) are compositionally biased toward basic and acidic residues. Residues 801-804 (KDEL) carry the Prevents secretion from ER motif.

The protein belongs to the heat shock protein 90 family. Homodimer; disulfide-linked. Component of an EIF2 complex at least composed of CELF1/CUGBP1, CALR, CALR3, EIF2S1, EIF2S2, HSP90B1 and HSPA5. Part of a large chaperone multiprotein complex comprising DNAJB11, HSP90B1, HSPA5, HYOU, PDIA2, PDIA4, PDIA6, PPIB, SDF2L1, UGGT1 and very small amounts of ERP29, but not, or at very low levels, CALR nor CANX. Interacts with AIMP1; regulates its retention in the endoplasmic reticulum. Hyperglycosylated form interacts with OS9; promoting its degradation by the endoplasmic reticulum associated degradation (ERAD). Interacts with CNPY3. This interaction is disrupted in the presence of ATP. Interacts with TLR4 and TLR9, but not with TLR3. Interacts with MZB1 in a calcium-dependent manner. Interacts with METTL23. Interacts with IL1B; the interaction facilitates cargo translocation into the ERGIC. Interacts with EIF2AK3. Phosphorylated by CK2. Post-translationally, N-glycosylated cotranslationally at Asn-217 by STT3A-containing OST-A complex: this glycosylation is constitutive. In response to various stress, 5 additional facultative sites (Asn-62, Asn-107, Asn-445, Asn-481 and Asn-502) can be glycosylated post-translationally by STT3B-containing OST-B complex, leading to a hyperglycosylated form that is degraded by the ER-associated degradation (ERAD) pathway. In normal conditions, the OST-A complex together with CCDC134 prevent glycosylation at facultative sites during protein folding, thereby preventing hyperglycosylation. Mechanistically, nascent HSP90B1 is tethered during translation to a specialized CCDC134-containing translocon that forms a microenvironment for its folding, in which STT3A associates with the SRT pseudosubstrate motif, and prevents access to facultative glycosylation sites until folding is completed, rendering its facultative sites inaccessible to the OST-B complex.

Its subcellular location is the endoplasmic reticulum lumen. It localises to the sarcoplasmic reticulum lumen. The protein localises to the melanosome. It catalyses the reaction ATP + H2O = ADP + phosphate + H(+). Functionally, ATP-dependent chaperone involved in the processing of proteins in the endoplasmic reticulum, regulating their transport. Together with MESD, acts as a modulator of the Wnt pathway by promoting the folding of LRP6, a coreceptor of the canonical Wnt pathway. When associated with CNPY3, required for proper folding of Toll-like receptors. Promotes folding and trafficking of TLR4 to the cell surface. May participate in the unfolding of cytosolic leaderless cargos (lacking the secretion signal sequence) such as the interleukin 1/IL-1 to facilitate their translocation into the ERGIC (endoplasmic reticulum-Golgi intermediate compartment) and secretion; the translocation process is mediated by the cargo receptor TMED10. The sequence is that of Endoplasmin (HSP90B1) from Bos taurus (Bovine).